Here is a 749-residue protein sequence, read N- to C-terminus: Dynamin-1-like protein (749 aa).

Met-1 is subject to N-acetylmethionine. In terms of domain architecture, Dynamin-type G spans 22 to 315 (IIQLPQIVVV…LMHHIRDCLP (294 aa)). The interval 32–39 (GTQSSGKS) is G1 motif. 32 to 40 (GTQSSGKSS) is a GTP binding site. Residues 58-60 (VTR) form a G2 motif region. Positions 74–93 (DKRKTTGEENDPATWKNSRH) are disordered. The tract at residues 159-162 (DLPG) is G3 motif. Residues 228–231 (TKLD) form a G4 motif region. Residues 228 to 234 (TKLDLMD) and 259 to 262 (NRSQ) each bind GTP. Positions 258–261 (VNRS) are G5 motif. A middle domain region spans residues 357-502 (YCNTIEGTAK…NEMVHNLVAI (146 aa)). The interaction with GSK3B stretch occupies residues 461 to 698 (NYSTQELLRF…NHVKDTLQSE (238 aa)). Residues 515–582 (ADACGLMNNN…IQESRRETKN (68 aa)) form a b domain region. The disordered stretch occupies residues 536–604 (ELPSAVSRDK…QEPTTGNWRG (69 aa)). Ser-542 is modified (phosphoserine). Residues Lys-545 and Lys-548 each participate in a glycyl lysine isopeptide (Lys-Gly) (interchain with G-Cter in SUMO) cross-link. Low complexity predominate over residues 550-567 (PSALAPASQEPSPAASAE). The residue at position 561 (Ser-561) is a Phosphoserine. Over residues 568-581 (ADGKLIQESRRETK) the composition is skewed to basic and acidic residues. Residues Lys-571 and Lys-581 each participate in a glycyl lysine isopeptide (Lys-Gly) (interchain with G-Cter in SUMO) cross-link. O-linked (GlcNAc) threonine glycosylation is found at Thr-598 and Thr-599. Lys-607 is covalently cross-linked (Glycyl lysine isopeptide (Lys-Gly) (interchain with G-Cter in SUMO)). An N6-acetyllysine; alternate modification is found at Lys-610. Lys-610 is covalently cross-linked (Glycyl lysine isopeptide (Lys-Gly) (interchain with G-Cter in SUMO); alternate). Residue Lys-619 forms a Glycyl lysine isopeptide (Lys-Gly) (interchain with G-Cter in SUMO) linkage. Ser-620 bears the Phosphoserine mark. Residue Lys-621 forms a Glycyl lysine isopeptide (Lys-Gly) (interchain with G-Cter in SUMO) linkage. Position 629 is a phosphoserine; by CDK1 and PINK1 (Ser-629). Position 650 is a phosphoserine; by CAMK1 and PKA (Ser-650). An S-nitrosocysteine modification is found at Cys-657. One can recognise a GED domain in the interval 657 to 748 (CEVIERLIKS…IIAEIRETHL (92 aa)). Residues 667–681 (YFLIVRKNIQDSVPK) form an important for homodimerization region.

It belongs to the TRAFAC class dynamin-like GTPase superfamily. Dynamin/Fzo/YdjA family. As to quaternary structure, homotetramer; dimerizes through the N-terminal GTP-middle region of one molecule binding to the GED domain of another DNM1L molecule. Oligomerizes in a GTP-dependent manner to form membrane-associated tubules with a spiral pattern. Interacts with GSK3B and MARCHF5. Interacts (via the GTPase and B domains) with UBE2I; the interaction promotes sumoylation of DNM1L, mainly in its B domain. Interacts with PPP3CA; the interaction dephosphorylates DNM1L and regulates its transition to mitochondria. Interacts with BCL2L1 isoform BCL-X(L) and CLTA; DNM1L and BCL2L1 isoform BCL-X(L) may form a complex in synaptic vesicles that also contains clathrin and MFF. Interacts with MFF; the interaction is inhinited by C11orf65/MFI. Interacts with FIS1. Interacts with MIEF2 and MIEF1; GTP-dependent, regulates GTP hydrolysis and DNM1L oligomerization. Interacts with PGAM5; this interaction leads to dephosphorylation at Ser-656 and activation of GTPase activity and eventually to mitochondria fragmentation. Interacts with RALBP1; during mitosis, recruits DNM1L to the mitochondrion and mediates its activation by the mitotic kinase cyclin B-CDK1. Phosphorylation/dephosphorylation events on two sites near the GED domain regulate mitochondrial fission. Phosphorylation on Ser-650 by CAMK1 and PKA inhibits the GTPase activity, leading to a defect in mitochondrial fission promoting mitochondrial elongation. Dephosphorylated on this site by PPP3CA which promotes mitochondrial fission. Phosphorylation on Ser-629 by CDK1 and PINK1 activates the GTPase activity and promotes mitochondrial fission. Phosphorylated in a circadian manner at Ser-650. In terms of processing, sumoylated on various lysine residues within the B domain, probably by MUL1. Sumoylation positively regulates mitochondrial fission. Desumoylated by SENP5 during G2/M transition of mitosis. Appears to be linked to its catalytic activity. Post-translationally, S-nitrosylation increases DNM1L dimerization, mitochondrial fission and causes neuronal damage. O-GlcNAcylation augments the level of the GTP-bound active form of DNM1L and induces translocation from the cytoplasm to mitochondria in cardiomyocytes. It also decreases phosphorylation at Ser-650. In terms of processing, ubiquitination by MARCHF5 affects mitochondrial morphology.

The protein resides in the cytoplasm. It localises to the cytosol. Its subcellular location is the golgi apparatus. It is found in the endomembrane system. The protein localises to the mitochondrion outer membrane. The protein resides in the peroxisome. It localises to the membrane. Its subcellular location is the clathrin-coated pit. It is found in the cytoplasmic vesicle. The protein localises to the secretory vesicle. The protein resides in the synaptic vesicle membrane. It carries out the reaction GTP + H2O = GDP + phosphate + H(+). Its function is as follows. Functions in mitochondrial and peroxisomal division. Mediates membrane fission through oligomerization into membrane-associated tubular structures that wrap around the scission site to constrict and sever the mitochondrial membrane through a GTP hydrolysis-dependent mechanism. The specific recruitment at scission sites is mediated by membrane receptors like MFF, MIEF1 and MIEF2 for mitochondrial membranes. While the recruitment by the membrane receptors is GTP-dependent, the following hydrolysis of GTP induces the dissociation from the receptors and allows DNM1L filaments to curl into closed rings that are probably sufficient to sever a double membrane. Acts downstream of PINK1 to promote mitochondrial fission in a PRKN-dependent manner. Plays an important role in mitochondrial fission during mitosis. Through its function in mitochondrial division, ensures the survival of at least some types of postmitotic neurons, including Purkinje cells, by suppressing oxidative damage. Required for normal brain development, including that of cerebellum. Facilitates developmentally regulated apoptosis during neural tube formation. Required for a normal rate of cytochrome c release and caspase activation during apoptosis; this requirement may depend upon the cell type and the physiological apoptotic cues. Required for formation of endocytic vesicles. Proposed to regulate synaptic vesicle membrane dynamics through association with BCL2L1 isoform Bcl-X(L) which stimulates its GTPase activity in synaptic vesicles; the function may require its recruitment by MFF to clathrin-containing vesicles. Required for programmed necrosis execution. Rhythmic control of its activity following phosphorylation at Ser-650 is essential for the circadian control of mitochondrial ATP production. The sequence is that of Dynamin-1-like protein from Bos taurus (Bovine).